The primary structure comprises 325 residues: NADH-quinone oxidoreductase subunit H (325 aa).

A run of 8 helical transmembrane segments spans residues 11–31, 81–101, 114–134, 154–174, 186–206, 237–257, 265–285, and 304–324; these read ILLSILKAVVILLVVVTCGAF, VIFTLAPVIAFTSLLLAFAIV, IGILFFLMMAGLAVYAVLFAG, LSYEVFLGLSLMGVVAQAGSF, LWNVIPQFFGFVTFAIAGVAV, FFVGEYIGIVTVSALIVTLFF, LPPFIWFALKTAFFMMMFILI, and VCLPLTLVNLLVTAAVILWQA.

Belongs to the complex I subunit 1 family. As to quaternary structure, NDH-1 is composed of 13 different subunits. Subunits NuoA, H, J, K, L, M, N constitute the membrane sector of the complex.

It is found in the cell inner membrane. It catalyses the reaction a quinone + NADH + 5 H(+)(in) = a quinol + NAD(+) + 4 H(+)(out). In terms of biological role, NDH-1 shuttles electrons from NADH, via FMN and iron-sulfur (Fe-S) centers, to quinones in the respiratory chain. The immediate electron acceptor for the enzyme in this species is believed to be ubiquinone. Couples the redox reaction to proton translocation (for every two electrons transferred, four hydrogen ions are translocated across the cytoplasmic membrane), and thus conserves the redox energy in a proton gradient. This subunit may bind ubiquinone. This is NADH-quinone oxidoreductase subunit H from Klebsiella pneumoniae (strain 342).